The chain runs to 344 residues: Uroporphyrinogen decarboxylase (344 aa).

Substrate-binding positions include 24–28, Phe43, Asp74, Tyr151, Ser206, and His323; that span reads RQAGR.

Belongs to the uroporphyrinogen decarboxylase family. As to quaternary structure, homodimer.

The protein resides in the cytoplasm. It carries out the reaction uroporphyrinogen III + 4 H(+) = coproporphyrinogen III + 4 CO2. It functions in the pathway porphyrin-containing compound metabolism; protoporphyrin-IX biosynthesis; coproporphyrinogen-III from 5-aminolevulinate: step 4/4. Functionally, catalyzes the decarboxylation of four acetate groups of uroporphyrinogen-III to yield coproporphyrinogen-III. In Rhodobacter capsulatus (Rhodopseudomonas capsulata), this protein is Uroporphyrinogen decarboxylase.